Reading from the N-terminus, the 120-residue chain is NADH-quinone oxidoreductase subunit A (120 aa).

Transmembrane regions (helical) follow at residues 10-30, 65-85, and 89-109; these read ILVF…MGWF, VAIL…WAVV, and IGWF…VGFI.

Belongs to the complex I subunit 3 family. NDH-1 is composed of 14 different subunits. Subunits NuoA, H, J, K, L, M, N constitute the membrane sector of the complex.

Its subcellular location is the cell inner membrane. The catalysed reaction is a quinone + NADH + 5 H(+)(in) = a quinol + NAD(+) + 4 H(+)(out). Its function is as follows. NDH-1 shuttles electrons from NADH, via FMN and iron-sulfur (Fe-S) centers, to quinones in the respiratory chain. The immediate electron acceptor for the enzyme in this species is believed to be ubiquinone. Couples the redox reaction to proton translocation (for every two electrons transferred, four hydrogen ions are translocated across the cytoplasmic membrane), and thus conserves the redox energy in a proton gradient. The chain is NADH-quinone oxidoreductase subunit A from Coxiella burnetii (strain Dugway 5J108-111).